Here is an 874-residue protein sequence, read N- to C-terminus: MKSAEIREAFLGFFEEQGHTRVASSSLIPGNDPTLLFTNAGMNQFKDCFLGQEKRAYTRAVTSQKCVRAGGKHNDLENVGYTARHHTFFEMLGNFSFGDYFKRDAITYAWTFLTSEKWLNLPKEKLWVTVYATDDEAYDIWTKEIGVPAERMVRIGDNKGAPYASDNFWTMGDTGPCGPCSEIFFDHGPEIWGGPPGSPEEDGDRYIEIWNNVFMQFNRTADGVLHPLPAPSVDTGMGLERVSAVLQHVHSNYEIDLFQSLLAASAKAIGCSNDNQASLKVVADHIRSCGFLIADGVLPSNEGRGYVLRRIIRRACRHGNKLGAKGSFFYQIVAALVAEMGSAFPELVQQQSHIERVLKGEEEQFAKTLEQGLKILEQDLADLKGTVVPGEVVFKLYDTYGFPMDLTGDIARERNLTLDEAGFEREMDAQRVRARSASSFGMDYNSLVKVDVATQFTGYSATTGSASVVALYKEGQSVSHLNEGEEGVVILDITPFYAESGGQIGDSGFLQAGDARFDVSDTTKTGGAFLHHGVVASGSLSVGAQVETQVADEVRDATKLNHSATHLLHAALRQVLGEHVQQKGSLVDSQRLRFDFSHFEAIKAEQLRALEDIVNAEIRKNTEVMTEETDIDTAKKKGAMALFGEKYGDSVRVLSMGGEFSVELCGGIHASRTGDIALFKIVSEGGVAAGVRRIEAVTGAAALAWLNSAEDQLKEAATLVKGNRDNLLDKLTAVIERNRLLEKQLEQLQAKAASAAGDDLSSAALDVKGVKVLATRLDGQDGKALLALVDQLKNKLGRAVILLGSVHEDKVVLVAGVTKDLTGQLKAGDLMKQAAAAVGGKGGGRPDMAQGGGVDAGALDSALALAVPFVEQGI.

Residues His-562, His-566, Cys-665, and His-669 each coordinate Zn(2+).

Belongs to the class-II aminoacyl-tRNA synthetase family. Zn(2+) is required as a cofactor.

The protein localises to the cytoplasm. It carries out the reaction tRNA(Ala) + L-alanine + ATP = L-alanyl-tRNA(Ala) + AMP + diphosphate. In terms of biological role, catalyzes the attachment of alanine to tRNA(Ala) in a two-step reaction: alanine is first activated by ATP to form Ala-AMP and then transferred to the acceptor end of tRNA(Ala). Also edits incorrectly charged Ser-tRNA(Ala) and Gly-tRNA(Ala) via its editing domain. The polypeptide is Alanine--tRNA ligase (Pseudomonas syringae pv. syringae (strain B728a)).